A 357-amino-acid polypeptide reads, in one-letter code: Peptide chain release factor 1 (357 aa).

Glutamine 236 carries the post-translational modification N5-methylglutamine.

Belongs to the prokaryotic/mitochondrial release factor family. In terms of processing, methylated by PrmC. Methylation increases the termination efficiency of RF1.

It localises to the cytoplasm. Its function is as follows. Peptide chain release factor 1 directs the termination of translation in response to the peptide chain termination codons UAG and UAA. This Mycolicibacterium paratuberculosis (strain ATCC BAA-968 / K-10) (Mycobacterium paratuberculosis) protein is Peptide chain release factor 1.